The following is a 172-amino-acid chain: Small ribosomal subunit protein uS5 (172 aa).

The S5 DRBM domain occupies 17-80; it reads LREKMISVNR…EQARRNMFKV (64 aa).

The protein belongs to the universal ribosomal protein uS5 family. In terms of assembly, part of the 30S ribosomal subunit. Contacts proteins S4 and S8.

With S4 and S12 plays an important role in translational accuracy. Functionally, located at the back of the 30S subunit body where it stabilizes the conformation of the head with respect to the body. The protein is Small ribosomal subunit protein uS5 of Burkholderia pseudomallei (strain 1106a).